A 457-amino-acid chain; its full sequence is Chromosomal replication initiator protein DnaA (457 aa).

The domain I, interacts with DnaA modulators stretch occupies residues 1-77 (MDTNNNIEKE…EILSQNKVGM (77 aa)). The domain II stretch occupies residues 77–108 (MHLAHSVDVRIEVAPKIQVNAQSNINYKATKT). The tract at residues 109 to 323 (SVKDSYTFEN…GAIIKISVNA (215 aa)) is domain III, AAA+ region. Positions 153, 155, 156, and 157 each coordinate ATP. The domain IV, binds dsDNA stretch occupies residues 324-457 (NLMNATIDLN…DKKTAFNSSE (134 aa)).

It belongs to the DnaA family. As to quaternary structure, oligomerizes as a right-handed, spiral filament on DNA at oriC.

It is found in the cytoplasm. Plays an essential role in the initiation and regulation of chromosomal replication. ATP-DnaA binds to the origin of replication (oriC) to initiate formation of the DNA replication initiation complex once per cell cycle. Binds the DnaA box (a 9 base pair repeat at the origin) and separates the double-stranded (ds)DNA. Forms a right-handed helical filament on oriC DNA; dsDNA binds to the exterior of the filament while single-stranded (ss)DNA is stabiized in the filament's interior. The ATP-DnaA-oriC complex binds and stabilizes one strand of the AT-rich DNA unwinding element (DUE), permitting loading of DNA polymerase. After initiation quickly degrades to an ADP-DnaA complex that is not apt for DNA replication. Binds acidic phospholipids. This Helicobacter pylori (strain J99 / ATCC 700824) (Campylobacter pylori J99) protein is Chromosomal replication initiator protein DnaA.